The sequence spans 395 residues: LIM/homeobox protein Lhx3 (395 aa).

LIM zinc-binding domains follow at residues 28–78 and 87–141; these read CAGC…CKDD and CAAC…CKAD. The homeobox DNA-binding region spans 154–213; sequence AKRPRTTITAKQLETLKNAYNNSPKPARHVREQLSSETGLDMRVVQVWFQNRRAKEKRLK. 2 disordered regions span residues 208–304 and 363–383; these read KEKR…QDQY and GPSS…PVSP. Residues 257–278 are compositionally biased toward polar residues; it reads DEPSMSEMNHSNGIYNSLNDSS.

In terms of assembly, interacts with ldb1 and with the N-terminus of rnf12. As to expression, in dorsal regions at neural tube and tailbud stages and in adults predominantly in the pituitary gland and weakly in the eye and brain.

Its subcellular location is the nucleus. Transcription factor. May be involved in the specification and maintenance of differentiation of distinct neuronal and neuroendocrine tissues. Early marker for the pituitary and pineal lineages, it may be involved in specifying these lineages. The protein is LIM/homeobox protein Lhx3 (lhx3) of Xenopus laevis (African clawed frog).